Here is a 145-residue protein sequence, read N- to C-terminus: Basic phospholipase A2 cPm08 (145 aa).

The N-terminal stretch at 1–21 (MYPAHLLVLLAVCVSLLGASA) is a signal peptide. A propeptide spanning residues 22–27 (IPPLPL) is cleaved from the precursor. Intrachain disulfides connect Cys-38-Cys-98, Cys-54-Cys-144, Cys-56-Cys-72, Cys-71-Cys-125, Cys-78-Cys-118, Cys-87-Cys-111, and Cys-105-Cys-116. Residues Tyr-55, Gly-57, and Gly-59 each contribute to the Ca(2+) site. The active site involves His-75. Position 76 (Asp-76) interacts with Ca(2+). The active site involves Asp-119.

This sequence belongs to the phospholipase A2 family. Group I subfamily. D49 sub-subfamily. The cofactor is Ca(2+). As to expression, expressed by the venom gland.

It is found in the secreted. It catalyses the reaction a 1,2-diacyl-sn-glycero-3-phosphocholine + H2O = a 1-acyl-sn-glycero-3-phosphocholine + a fatty acid + H(+). In terms of biological role, PLA2 catalyzes the calcium-dependent hydrolysis of the 2-acyl groups in 3-sn-phosphoglycerides. The sequence is that of Basic phospholipase A2 cPm08 from Laticauda semifasciata (Black-banded sea krait).